The sequence spans 332 residues: MAAVFLVTLYEYSPLFYIAVVFTCFIVTTGLVLGWFGWDVPVILRNSEETQFSTRAFKKQMRQVKNPFGLEITNSSAASLATGMALRTDCLEDSRLTCYWGCSVQKLYEALQKHAYCFRISTPQALEEALYSDYLHREQYFIKKHSKEEIYCQLPSDTEIEDFGPVPRSRYPLVALLTLADEDDREIYDIISMVSVIHIPDKTYKLPCRILYQYLILAQGQFYDLKQLFMSANNSPPPSNDESPEDRSVEQSLLEKVGLAGNDGDPVEESSRDCVVCQNGGVNWVLLPCRHACLCDSCVRYFKQCPMCRQFVQESFALCGQKEPDKDLLETS.

The segment at cysteine 274–arginine 309 adopts an RING-type zinc-finger fold.

It localises to the nucleus. Its subcellular location is the endoplasmic reticulum. Its function is as follows. Able to inhibit growth in several cell lines. The polypeptide is Cell growth regulator with RING finger domain protein 1 (Cgrrf1) (Mus musculus (Mouse)).